A 119-amino-acid polypeptide reads, in one-letter code: Acidic phospholipase A2 CM-II (119 aa).

Positions 25, 27, and 29 each coordinate Ca(2+). Residue H45 is part of the active site. A Ca(2+)-binding site is contributed by D46. D87 is a catalytic residue.

This sequence belongs to the phospholipase A2 family. Group II subfamily. D49 sub-subfamily. It depends on Ca(2+) as a cofactor. Post-translationally, contains 6 disulfide bonds. In terms of tissue distribution, expressed by the venom gland.

It is found in the secreted. It catalyses the reaction a 1,2-diacyl-sn-glycero-3-phosphocholine + H2O = a 1-acyl-sn-glycero-3-phosphocholine + a fatty acid + H(+). Functionally, PLA2 catalyzes the calcium-dependent hydrolysis of the 2-acyl groups in 3-sn-phosphoglycerides. This chain is Acidic phospholipase A2 CM-II, found in Bitis nasicornis (Rhinoceros adder).